We begin with the raw amino-acid sequence, 174 residues long: Ribosome maturation factor RimM (174 aa).

Residues 91-164 enclose the PRC barrel domain; the sequence is DDAWYPHQLQ…KVVLSPPGGL (74 aa).

Belongs to the RimM family. In terms of assembly, binds ribosomal protein uS19.

It is found in the cytoplasm. In terms of biological role, an accessory protein needed during the final step in the assembly of 30S ribosomal subunit, possibly for assembly of the head region. Essential for efficient processing of 16S rRNA. May be needed both before and after RbfA during the maturation of 16S rRNA. It has affinity for free ribosomal 30S subunits but not for 70S ribosomes. This chain is Ribosome maturation factor RimM, found in Kineococcus radiotolerans (strain ATCC BAA-149 / DSM 14245 / SRS30216).